Reading from the N-terminus, the 148-residue chain is SsrA-binding protein (148 aa).

Positions 119 to 148 (AKGKKQHDKRQSMKEADWKREKQRLIKHTR) are disordered. The span at 127–142 (KRQSMKEADWKREKQR) shows a compositional bias: basic and acidic residues.

Belongs to the SmpB family.

Its subcellular location is the cytoplasm. Required for rescue of stalled ribosomes mediated by trans-translation. Binds to transfer-messenger RNA (tmRNA), required for stable association of tmRNA with ribosomes. tmRNA and SmpB together mimic tRNA shape, replacing the anticodon stem-loop with SmpB. tmRNA is encoded by the ssrA gene; the 2 termini fold to resemble tRNA(Ala) and it encodes a 'tag peptide', a short internal open reading frame. During trans-translation Ala-aminoacylated tmRNA acts like a tRNA, entering the A-site of stalled ribosomes, displacing the stalled mRNA. The ribosome then switches to translate the ORF on the tmRNA; the nascent peptide is terminated with the 'tag peptide' encoded by the tmRNA and targeted for degradation. The ribosome is freed to recommence translation, which seems to be the essential function of trans-translation. The sequence is that of SsrA-binding protein from Neisseria meningitidis serogroup C (strain 053442).